A 206-amino-acid polypeptide reads, in one-letter code: Urease accessory protein UreG (206 aa).

Residue 13–20 coordinates GTP; sequence GPVGSGKT.

This sequence belongs to the SIMIBI class G3E GTPase family. UreG subfamily. In terms of assembly, homodimer. UreD, UreF and UreG form a complex that acts as a GTP-hydrolysis-dependent molecular chaperone, activating the urease apoprotein by helping to assemble the nickel containing metallocenter of UreC. The UreE protein probably delivers the nickel.

The protein localises to the cytoplasm. Facilitates the functional incorporation of the urease nickel metallocenter. This process requires GTP hydrolysis, probably effectuated by UreG. The chain is Urease accessory protein UreG from Haloquadratum walsbyi (strain DSM 16790 / HBSQ001).